The sequence spans 449 residues: Na(+)-translocating NADH-quinone reductase subunit A (449 aa).

It belongs to the NqrA family. In terms of assembly, composed of six subunits; NqrA, NqrB, NqrC, NqrD, NqrE and NqrF.

It carries out the reaction a ubiquinone + n Na(+)(in) + NADH + H(+) = a ubiquinol + n Na(+)(out) + NAD(+). NQR complex catalyzes the reduction of ubiquinone-1 to ubiquinol by two successive reactions, coupled with the transport of Na(+) ions from the cytoplasm to the periplasm. NqrA to NqrE are probably involved in the second step, the conversion of ubisemiquinone to ubiquinol. The polypeptide is Na(+)-translocating NADH-quinone reductase subunit A (Actinobacillus pleuropneumoniae serotype 5b (strain L20)).